A 201-amino-acid chain; its full sequence is Rho GDP-dissociation inhibitor 2 (201 aa).

Residues 1–38 (MTEKAPEPHVEEDDDDELDSKLNYKPPPQKSLKELQEM) form a disordered region. T2 carries the post-translational modification N-acetylthreonine. Position 21 is an N6-acetyllysine (K21). Y24 carries the post-translational modification Phosphotyrosine. N6-acetyllysine occurs at positions 25, 40, 47, 102, and 124. A Phosphoserine modification is found at S145. K175 is subject to N6-acetyllysine.

It belongs to the Rho GDI family. In terms of assembly, interacts with RHOA. Interacts with RAC1. Interacts with RAC2. Interacts with CDC42. In terms of tissue distribution, detected in bone marrow, thymus and spleen.

It localises to the cytoplasm. The protein resides in the cytosol. Functionally, regulates the GDP/GTP exchange reaction of the Rho proteins by inhibiting the dissociation of GDP from them, and the subsequent binding of GTP to them. Regulates reorganization of the actin cytoskeleton mediated by Rho family members. This Homo sapiens (Human) protein is Rho GDP-dissociation inhibitor 2 (ARHGDIB).